Here is a 405-residue protein sequence, read N- to C-terminus: Pleckstrin homology-like domain family A member 1 (405 aa).

Composition is skewed to basic and acidic residues over residues 1–11 and 54–63; these read MRRTPAAERLS and RSPEDGREQP. 3 disordered regions span residues 1 to 67, 189 to 217, and 293 to 405; these read MRRT…AHGS, QLQQQQQQQQPGQGTAEPSQPSGPTVASL, and QQHL…SNSA. Residues 153–277 enclose the PH domain; it reads ALKEGVLEKR…AEITLQMVQY (125 aa). The segment covering 189 to 202 has biased composition (low complexity); the sequence is QLQQQQQQQQPGQG. Residues 204 to 213 are compositionally biased toward polar residues; it reads AEPSQPSGPT. The span at 294–309 shows a compositional bias: low complexity; that stretch reads QHLVQQQPPQTQQIQP. The tract at residues 309–344 is 16 X 2 AA repeats of P-Q; that stretch reads PQPQPQIQPQPQPQIQPQPQPQPQPQPQPQPQPQPQ. Over residues 310–342 the composition is skewed to pro residues; the sequence is QPQPQIQPQPQPQIQPQPQPQPQPQPQPQPQPQ. Positions 350–376 are enriched in basic residues; that stretch reads PHPHPHPYSHPHQHPHPHPHPHPHPHP. The 11 X 2 AA repeats of P-H stretch occupies residues 354–377; sequence PHPYSHPHQHPHPHPHPHPHPHPH. Over residues 378–389 the composition is skewed to low complexity; the sequence is PYQLQHAHQPLH.

In terms of assembly, interacts with RPL14, EIF3S7 and PABPC4. As to expression, widely expressed with very high levels in adult liver and high levels in adult lung. According to PubMed:10428057 expressed at low levels in liver. Expressed at increased levels in atherosclerotic lesions observed in hyperhomocysteinema.

It localises to the cytoplasm. The protein resides in the cytoplasmic vesicle. The protein localises to the nucleus. It is found in the nucleolus. In terms of biological role, seems to be involved in regulation of apoptosis. May be involved in detachment-mediated programmed cell death. May mediate apoptosis during neuronal development. May be involved in regulation of anti-apoptotic effects of IGF1. Required for TCR-induced apoptosis and expression of TNFRSF6/FAS in a T-cell hybridoma cell line. May be involved in translational regulation. The polypeptide is Pleckstrin homology-like domain family A member 1 (Phlda1) (Mus musculus (Mouse)).